The following is a 304-amino-acid chain: ATP phosphoribosyltransferase (304 aa).

Belongs to the ATP phosphoribosyltransferase family. Long subfamily. Mg(2+) is required as a cofactor.

The protein localises to the cytoplasm. It carries out the reaction 1-(5-phospho-beta-D-ribosyl)-ATP + diphosphate = 5-phospho-alpha-D-ribose 1-diphosphate + ATP. It participates in amino-acid biosynthesis; L-histidine biosynthesis; L-histidine from 5-phospho-alpha-D-ribose 1-diphosphate: step 1/9. Feedback inhibited by histidine. In terms of biological role, catalyzes the condensation of ATP and 5-phosphoribose 1-diphosphate to form N'-(5'-phosphoribosyl)-ATP (PR-ATP). Has a crucial role in the pathway because the rate of histidine biosynthesis seems to be controlled primarily by regulation of HisG enzymatic activity. This Xanthomonas campestris pv. campestris (strain B100) protein is ATP phosphoribosyltransferase.